Here is a 141-residue protein sequence, read N- to C-terminus: Lutropin subunit beta (141 aa).

A signal peptide spans 1–20; it reads MEMLQGLLLLLLLSMGGAWA. Cystine bridges form between cysteine 29/cysteine 77, cysteine 43/cysteine 92, cysteine 46/cysteine 130, cysteine 54/cysteine 108, cysteine 58/cysteine 110, and cysteine 113/cysteine 120. N-linked (GlcNAc...) asparagine glycosylation is found at asparagine 33 and asparagine 50.

This sequence belongs to the glycoprotein hormones subunit beta family. In terms of assembly, heterodimer of a common alpha chain and a unique beta chain which confers biological specificity to thyrotropin, lutropin, follitropin and gonadotropin.

It localises to the secreted. Promotes spermatogenesis and ovulation by stimulating the testes and ovaries to synthesize steroids. This is Lutropin subunit beta (LHB) from Gorilla gorilla gorilla (Western lowland gorilla).